We begin with the raw amino-acid sequence, 237 residues long: LexA repressor (237 aa).

The segment at residues 26–46 (FDEMKEALDLRSKSGIHRLIT) is a DNA-binding region (H-T-H motif). The tract at residues 84 to 110 (GFSPSVIEGGAQPKPSSRDLAPARSSG) is disordered. Catalysis depends on for autocatalytic cleavage activity residues S158 and K196.

The protein belongs to the peptidase S24 family. Homodimer.

The catalysed reaction is Hydrolysis of Ala-|-Gly bond in repressor LexA.. Represses a number of genes involved in the response to DNA damage (SOS response), including recA and lexA. In the presence of single-stranded DNA, RecA interacts with LexA causing an autocatalytic cleavage which disrupts the DNA-binding part of LexA, leading to derepression of the SOS regulon and eventually DNA repair. This is LexA repressor from Parvibaculum lavamentivorans (strain DS-1 / DSM 13023 / NCIMB 13966).